The sequence spans 252 residues: 2-succinyl-6-hydroxy-2,4-cyclohexadiene-1-carboxylate synthase (252 aa).

It belongs to the AB hydrolase superfamily. MenH family. Monomer.

The catalysed reaction is 5-enolpyruvoyl-6-hydroxy-2-succinyl-cyclohex-3-ene-1-carboxylate = (1R,6R)-6-hydroxy-2-succinyl-cyclohexa-2,4-diene-1-carboxylate + pyruvate. The protein operates within quinol/quinone metabolism; 1,4-dihydroxy-2-naphthoate biosynthesis; 1,4-dihydroxy-2-naphthoate from chorismate: step 3/7. It participates in quinol/quinone metabolism; menaquinone biosynthesis. Its function is as follows. Catalyzes a proton abstraction reaction that results in 2,5-elimination of pyruvate from 2-succinyl-5-enolpyruvyl-6-hydroxy-3-cyclohexene-1-carboxylate (SEPHCHC) and the formation of 2-succinyl-6-hydroxy-2,4-cyclohexadiene-1-carboxylate (SHCHC). This chain is 2-succinyl-6-hydroxy-2,4-cyclohexadiene-1-carboxylate synthase, found in Escherichia coli O81 (strain ED1a).